Reading from the N-terminus, the 138-residue chain is MAKATSSAPSQRMLRVGEQVRAALTQILQRGEVRDDLIEGTVISISEVRMSPDLKIATAYVTPLGVADHTDIISALNRHAKFMRGRLGPQLRQMKYMPELRFRDDTSFDNYQKIDALLRSPEVQRDLGPSNEKDDEQN.

The interval 119–138 (RSPEVQRDLGPSNEKDDEQN) is disordered.

This sequence belongs to the RbfA family. As to quaternary structure, monomer. Binds 30S ribosomal subunits, but not 50S ribosomal subunits or 70S ribosomes.

The protein resides in the cytoplasm. One of several proteins that assist in the late maturation steps of the functional core of the 30S ribosomal subunit. Associates with free 30S ribosomal subunits (but not with 30S subunits that are part of 70S ribosomes or polysomes). Required for efficient processing of 16S rRNA. May interact with the 5'-terminal helix region of 16S rRNA. In Agrobacterium fabrum (strain C58 / ATCC 33970) (Agrobacterium tumefaciens (strain C58)), this protein is Ribosome-binding factor A.